The chain runs to 439 residues: Tubulin beta chain (439 aa).

Residues Gln11, Glu69, Ser138, Gly142, Thr143, Gly144, Asn204, and Asn226 each contribute to the GTP site. Glu69 provides a ligand contact to Mg(2+).

The protein belongs to the tubulin family. In terms of assembly, dimer of alpha and beta chains. A typical microtubule is a hollow water-filled tube with an outer diameter of 25 nm and an inner diameter of 15 nM. Alpha-beta heterodimers associate head-to-tail to form protofilaments running lengthwise along the microtubule wall with the beta-tubulin subunit facing the microtubule plus end conferring a structural polarity. Microtubules usually have 13 protofilaments but different protofilament numbers can be found in some organisms and specialized cells. Requires Mg(2+) as cofactor.

It is found in the cytoplasm. The protein resides in the cytoskeleton. Functionally, tubulin is the major constituent of microtubules, a cylinder consisting of laterally associated linear protofilaments composed of alpha- and beta-tubulin heterodimers. Microtubules grow by the addition of GTP-tubulin dimers to the microtubule end, where a stabilizing cap forms. Below the cap, tubulin dimers are in GDP-bound state, owing to GTPase activity of alpha-tubulin. The polypeptide is Tubulin beta chain (TUB2) (Encephalitozoon cuniculi (strain GB-M1) (Microsporidian parasite)).